The sequence spans 560 residues: Dihydroxy-acid dehydratase (560 aa).

Cys52 serves as a coordination point for [2Fe-2S] cluster. Asp84 lines the Mg(2+) pocket. Cys125 serves as a coordination point for [2Fe-2S] cluster. Residues Asp126 and Lys127 each contribute to the Mg(2+) site. Position 127 is an N6-carboxylysine (Lys127). Cys197 is a binding site for [2Fe-2S] cluster. Glu448 serves as a coordination point for Mg(2+). Ser474 functions as the Proton acceptor in the catalytic mechanism.

The protein belongs to the IlvD/Edd family. Homodimer. It depends on [2Fe-2S] cluster as a cofactor. The cofactor is Mg(2+).

It catalyses the reaction (2R)-2,3-dihydroxy-3-methylbutanoate = 3-methyl-2-oxobutanoate + H2O. The catalysed reaction is (2R,3R)-2,3-dihydroxy-3-methylpentanoate = (S)-3-methyl-2-oxopentanoate + H2O. The protein operates within amino-acid biosynthesis; L-isoleucine biosynthesis; L-isoleucine from 2-oxobutanoate: step 3/4. It functions in the pathway amino-acid biosynthesis; L-valine biosynthesis; L-valine from pyruvate: step 3/4. Its function is as follows. Functions in the biosynthesis of branched-chain amino acids. Catalyzes the dehydration of (2R,3R)-2,3-dihydroxy-3-methylpentanoate (2,3-dihydroxy-3-methylvalerate) into 2-oxo-3-methylpentanoate (2-oxo-3-methylvalerate) and of (2R)-2,3-dihydroxy-3-methylbutanoate (2,3-dihydroxyisovalerate) into 2-oxo-3-methylbutanoate (2-oxoisovalerate), the penultimate precursor to L-isoleucine and L-valine, respectively. The sequence is that of Dihydroxy-acid dehydratase from Francisella tularensis subsp. tularensis (strain WY96-3418).